A 259-amino-acid polypeptide reads, in one-letter code: Putative cysteine-rich repeat secretory protein 25 (259 aa).

The first 31 residues, 1–31 (MSSSFLSRPLVSVYVFAMVTMQLLFMQSVLS), serve as a signal peptide directing secretion. 2 consecutive Gnk2-homologous domains span residues 37–138 (AYLN…SIYT) and 144–256 (YRHI…LYPF).

The protein belongs to the cysteine-rich repeat secretory protein family.

The protein resides in the secreted. The polypeptide is Putative cysteine-rich repeat secretory protein 25 (CRRSP25) (Arabidopsis thaliana (Mouse-ear cress)).